The sequence spans 333 residues: Holliday junction branch migration complex subunit RuvB (333 aa).

Residues 1 to 173 (MTAPENLDAA…FGIIEHLEYY (173 aa)) are large ATPase domain (RuvB-L). ATP is bound by residues Leu11, Arg12, Gly53, Lys56, Thr57, Thr58, 120-122 (EDF), Arg163, Tyr173, and Arg210. Thr57 lines the Mg(2+) pocket. The segment at 174–244 (TAEEIATNLL…RAQSALDKLG (71 aa)) is small ATPAse domain (RuvB-S). The interval 247 to 333 (SAGLDDRDKK…IDDGNGIFLN (87 aa)) is head domain (RuvB-H). Residues Arg302 and Arg307 each coordinate DNA.

It belongs to the RuvB family. Homohexamer. Forms an RuvA(8)-RuvB(12)-Holliday junction (HJ) complex. HJ DNA is sandwiched between 2 RuvA tetramers; dsDNA enters through RuvA and exits via RuvB. An RuvB hexamer assembles on each DNA strand where it exits the tetramer. Each RuvB hexamer is contacted by two RuvA subunits (via domain III) on 2 adjacent RuvB subunits; this complex drives branch migration. In the full resolvosome a probable DNA-RuvA(4)-RuvB(12)-RuvC(2) complex forms which resolves the HJ.

It is found in the cytoplasm. The enzyme catalyses ATP + H2O = ADP + phosphate + H(+). Functionally, the RuvA-RuvB-RuvC complex processes Holliday junction (HJ) DNA during genetic recombination and DNA repair, while the RuvA-RuvB complex plays an important role in the rescue of blocked DNA replication forks via replication fork reversal (RFR). RuvA specifically binds to HJ cruciform DNA, conferring on it an open structure. The RuvB hexamer acts as an ATP-dependent pump, pulling dsDNA into and through the RuvAB complex. RuvB forms 2 homohexamers on either side of HJ DNA bound by 1 or 2 RuvA tetramers; 4 subunits per hexamer contact DNA at a time. Coordinated motions by a converter formed by DNA-disengaged RuvB subunits stimulates ATP hydrolysis and nucleotide exchange. Immobilization of the converter enables RuvB to convert the ATP-contained energy into a lever motion, pulling 2 nucleotides of DNA out of the RuvA tetramer per ATP hydrolyzed, thus driving DNA branch migration. The RuvB motors rotate together with the DNA substrate, which together with the progressing nucleotide cycle form the mechanistic basis for DNA recombination by continuous HJ branch migration. Branch migration allows RuvC to scan DNA until it finds its consensus sequence, where it cleaves and resolves cruciform DNA. This is Holliday junction branch migration complex subunit RuvB from Deinococcus radiodurans (strain ATCC 13939 / DSM 20539 / JCM 16871 / CCUG 27074 / LMG 4051 / NBRC 15346 / NCIMB 9279 / VKM B-1422 / R1).